A 566-amino-acid chain; its full sequence is Chondroitin sulfate proteoglycan 5 (566 aa).

An N-terminal signal peptide occupies residues 1 to 30; it reads MGRAGGGGPGRGPPPLLLFLGAALVLASGA. Over 31 to 423 the chain is Extracellular; the sequence is VPAREAGSAV…SIITDFQVMC (393 aa). Ser-38 carries an O-linked (Xyl...) (chondroitin sulfate) serine glycan. Positions 39-82 are disordered; it reads AVEAEELVKGSPAWEPPANDTREEAGPPAAGEDEASWTAPGGEL. Residue Asn-57 is glycosylated (N-linked (GlcNAc...) asparagine). Ser-117 carries O-linked (Xyl...) (chondroitin sulfate) serine glycosylation. 3 disordered regions span residues 143–202, 215–248, and 262–354; these read IPEA…LEPQ, GLDG…TPSW, and ESDF…ASSE. Ser-165 carries O-linked (GalNAc...) serine glycosylation. The interaction with TNC and TNR stretch occupies residues 264 to 301; it reads DFYPTTSFYDDLDEEEEEEEDDKDAVGGGDLEDENELL. Positions 273-286 are enriched in acidic residues; that stretch reads DDLDEEEEEEEDDK. One can recognise an EGF-like domain in the interval 371-413; that stretch reads RSVCDLFPSYCHNGGQCYLVENIGAFCRCNTQDYIWHKGMRCE. 3 disulfides stabilise this stretch: Cys-374-Cys-387, Cys-381-Cys-397, and Cys-399-Cys-412. The helical transmembrane segment at 424-444 threads the bilayer; sequence VAVGSAALVLLLLFMMTVFFA. Residues 442-460 are interaction with GOPC; that stretch reads FFAKKLYLLKTENTKLRRT. Residues 445 to 566 are Cytoplasmic-facing; it reads KKLYLLKTEN…DVNCLQNNLT (122 aa). 4 positions are modified to phosphoserine: Ser-467, Ser-475, Ser-483, and Ser-543.

As to quaternary structure, binds TNR and probably TNC. Interacts with ERBB3 and GOPC. Interacts with MDK; this interaction is independent of the presence of chondroitin sulfate chains and promotes elongation of oligodendroglial precursor-like cells. N-glycosylated. Post-translationally, O-glycosylated; contains chondroitin sulfate glycans. Part-time proteoglycan, expressed in part as a proteoglycan exhibiting chondroitin sulfate glycans and in part as a non-proteoglycan form. The relative amount of both forms depends on tissues and tissue maturation. In terms of processing, phosphorylated; in intracellular and extracellular parts. In terms of tissue distribution, detected in cerebrospinal fluid (at protein level). Detected in urine (at protein level). Expressed in brain (at protein level).

The protein resides in the cell membrane. The protein localises to the synaptic cell membrane. It localises to the endoplasmic reticulum membrane. It is found in the golgi apparatus membrane. Its subcellular location is the cell surface. The protein resides in the secreted. Functionally, may function as a growth and differentiation factor involved in neuritogenesis. May induce ERBB3 activation. In Homo sapiens (Human), this protein is Chondroitin sulfate proteoglycan 5 (CSPG5).